Consider the following 174-residue polypeptide: NADH-ubiquinone oxidoreductase chain 6 (174 aa).

6 helical membrane passes run 1 to 21, 24 to 44, 47 to 67, 86 to 106, 111 to 131, and 151 to 171; these read MTYV…GFSS, SPIY…TIIL, GGGY…MVVF, VEVL…VLWV, GVVV…EGEG, and WLVV…IEIA.

It belongs to the complex I subunit 6 family. In terms of assembly, core subunit of respiratory chain NADH dehydrogenase (Complex I) which is composed of 45 different subunits.

The protein localises to the mitochondrion inner membrane. The catalysed reaction is a ubiquinone + NADH + 5 H(+)(in) = a ubiquinol + NAD(+) + 4 H(+)(out). Core subunit of the mitochondrial membrane respiratory chain NADH dehydrogenase (Complex I) which catalyzes electron transfer from NADH through the respiratory chain, using ubiquinone as an electron acceptor. Essential for the catalytic activity and assembly of complex I. The polypeptide is NADH-ubiquinone oxidoreductase chain 6 (MT-ND6) (Pan paniscus (Pygmy chimpanzee)).